We begin with the raw amino-acid sequence, 454 residues long: UDP-N-acetylmuramate--L-alanine ligase (454 aa).

113–119 (GSHGKTT) is an ATP binding site.

Belongs to the MurCDEF family.

It is found in the cytoplasm. The enzyme catalyses UDP-N-acetyl-alpha-D-muramate + L-alanine + ATP = UDP-N-acetyl-alpha-D-muramoyl-L-alanine + ADP + phosphate + H(+). The protein operates within cell wall biogenesis; peptidoglycan biosynthesis. Its function is as follows. Cell wall formation. The chain is UDP-N-acetylmuramate--L-alanine ligase from Aquifex aeolicus (strain VF5).